The chain runs to 308 residues: Methionyl-tRNA formyltransferase (308 aa).

Position 109–112 (109–112) interacts with (6S)-5,6,7,8-tetrahydrofolate; it reads SLLP.

The protein belongs to the Fmt family.

The catalysed reaction is L-methionyl-tRNA(fMet) + (6R)-10-formyltetrahydrofolate = N-formyl-L-methionyl-tRNA(fMet) + (6S)-5,6,7,8-tetrahydrofolate + H(+). Its function is as follows. Attaches a formyl group to the free amino group of methionyl-tRNA(fMet). The formyl group appears to play a dual role in the initiator identity of N-formylmethionyl-tRNA by promoting its recognition by IF2 and preventing the misappropriation of this tRNA by the elongation apparatus. The protein is Methionyl-tRNA formyltransferase of Salinispora arenicola (strain CNS-205).